Consider the following 202-residue polypeptide: Endothelin-1 (202 aa).

An N-terminal signal peptide occupies residues 1 to 25 (MDYFPMIFALLFVAFQGAPEAAVLG). The propeptide occupies 26–50 (TELSAGAEDGGEKPAPATPWRPRRS). Cystine bridges form between cysteine 53–cysteine 67 and cysteine 55–cysteine 63. Residues 74–202 (VNTPEHVVPY…DKKVIYNRAH (129 aa)) constitute a propeptide that is removed on maturation. Positions 110–124 (CQCASQTDKKCWNFC) are endothelin-like.

It belongs to the endothelin/sarafotoxin family.

It localises to the secreted. In terms of biological role, endothelins are endothelium-derived vasoconstrictor peptides. Probable ligand for G-protein coupled receptors EDNRA and EDNRB which activates PTK2B, BCAR1, BCAR3 and, GTPases RAP1 and RHOA cascade in glomerular mesangial cells. Also binds the DEAR/FBXW7-AS1 receptor. Promotes mesenteric arterial wall remodeling via activation of ROCK signaling and subsequent colocalization of NFATC3 with F-actin filaments. NFATC3 then translocates to the nucleus where it subsequently promotes the transcription of the smooth muscle hypertrophy and differentiation marker ACTA2. In Bos taurus (Bovine), this protein is Endothelin-1 (EDN1).